The chain runs to 174 residues: MKSVKKLLLLAFAVCLAVGFSGCLEQPKIEVVGQKIQKVDADNTKIEIQVLVDNPNPIGISIDKISFDIYALVGGDKIYLGHGEQSNIKITSGNTTFTLPVTISNKKLVEVALKEKSTKIPIEIKGDIAVNLFITKVNIPIDIQQEIDVSAIAKEEVLNQLNNLNPNQIQSIAQ.

A helical membrane pass occupies residues 7–24 (LLLLAFAVCLAVGFSGCL).

It localises to the membrane. This is an uncharacterized protein from Methanocaldococcus jannaschii (strain ATCC 43067 / DSM 2661 / JAL-1 / JCM 10045 / NBRC 100440) (Methanococcus jannaschii).